Reading from the N-terminus, the 831-residue chain is Probable glucan 1,3-beta-glucosidase D (831 aa).

6 stretches are compositionally biased toward basic and acidic residues: residues 1–24 (MPSHSRSRDRYRSERDPSRRYREV), 44–56 (RRDDYQHDIRSHE), 79–93 (RSHDVEGRRRERSRA), 102–115 (SRRDRNRGGEEYRR), 137–151 (RDGQRARPRDMDREA), and 198–213 (QRERSQEQEQPRMESK). Disordered stretches follow at residues 1 to 179 (MPSH…SGSH) and 192 to 241 (HYDE…GQSK). Residues 1–297 (MPSHSRSRDR…AQPPFWKRKK (297 aa)) are Cytoplasmic-facing. The chain crosses the membrane as a helical; Signal-anchor for type II membrane protein span at residues 298–318 (WWIVIGVLVVVLAIVIPVAVV). Over 319 to 831 (MSKKHGHDDD…PSFGDLPEYY (513 aa)) the chain is Extracellular. 7 N-linked (GlcNAc...) asparagine glycosylation sites follow: asparagine 376, asparagine 381, asparagine 393, asparagine 410, asparagine 442, asparagine 546, and asparagine 558. Residue glutamate 597 is the Proton donor of the active site. N-linked (GlcNAc...) asparagine glycosylation is found at asparagine 610, asparagine 636, asparagine 669, and asparagine 689. The active-site Nucleophile is the glutamate 702.

This sequence belongs to the glycosyl hydrolase 5 (cellulase A) family.

It is found in the cell membrane. The enzyme catalyses Successive hydrolysis of beta-D-glucose units from the non-reducing ends of (1-&gt;3)-beta-D-glucans, releasing alpha-glucose.. Glucosidase involved in the degradation of cellulosic biomass. Active on lichenan. The chain is Probable glucan 1,3-beta-glucosidase D (exgD) from Aspergillus oryzae (strain ATCC 42149 / RIB 40) (Yellow koji mold).